A 1714-amino-acid chain; its full sequence is uncharacterized protein (1714 aa).

Disordered stretches follow at residues 47 to 70 (SVAG…SDDL) and 584 to 616 (KKTG…KSKK). ATP contacts are provided by residues 607 to 614 (ATKESGKS) and 806 to 813 (APTSAGKT). Positions 607-616 (ATKESGKSKK) are enriched in basic and acidic residues. Residues 793–963 (LDSVDRGNSA…WLNSSEQAKS (171 aa)) enclose the Helicase ATP-binding domain. The DEVH box signature appears at 913 to 916 (DEVH). Residues 1197–1223 (KRKRDDAEKKKKGDKDEDAGPEKDDDE) form a disordered region. Positions 1199 to 1218 (KRDDAEKKKKGDKDEDAGPE) are enriched in basic and acidic residues. Residues 1237–1391 (ALERFKLRGR…NPPFTVLFLL (155 aa)) enclose the Helicase C-terminal domain.

The protein belongs to the helicase family. SKI2 subfamily.

It localises to the nucleus. This is an uncharacterized protein from Caenorhabditis elegans.